The sequence spans 458 residues: MLPSQSPAIFTVSRLNQTVRLLLEHEMGQVWISGEISNFTQPASGHWYFTLKDDTAQVRCAMFRNSNRRVTFRPQHGQQVLVRANITLYEPRGDYQIIVESMQPAGEGLLQQKYEQLKAKLQAEGLFELQYKKSLPSPAHCVGVITSKTGAALHDILHVLKRRDPSLPVIIYSTAVQGDDAPGQIVRAIELANKRNECDVLIVGRGGGSLEDLWSFNDERVARAIFASRIPIVSAVGHETDVTIADFVADLRAPTPSAAAEVVSRNQQELLRQVQSTRQRLEMAMDYYLANRTRRFTQIHHRLQQQHPQLRLARQQTMLERLQKRMSFALENQLKRAGQQQQRLTRQLVQQNPQSRIHRAQTRIQQLEYRLAETLRAQLSATRERFGNAVTHLEAVSPLSTLARGYSVTSAADGAVLKQVKQVKVGETLTTRLGDGVVISEVSAVTKTRKSRKKTSNP.

The protein belongs to the XseA family. Heterooligomer composed of large and small subunits.

It is found in the cytoplasm. The catalysed reaction is Exonucleolytic cleavage in either 5'- to 3'- or 3'- to 5'-direction to yield nucleoside 5'-phosphates.. In terms of biological role, bidirectionally degrades single-stranded DNA into large acid-insoluble oligonucleotides, which are then degraded further into small acid-soluble oligonucleotides. The sequence is that of Exodeoxyribonuclease 7 large subunit from Escherichia coli O6:H1 (strain CFT073 / ATCC 700928 / UPEC).